Consider the following 343-residue polypeptide: CCN family member 3 (343 aa).

The first 18 residues, 1-18 (MTPHLALCFILLIQQVAS), serve as a signal peptide directing secretion. One can recognise an IGFBP N-terminal domain in the interval 19–90 (QKCPSQCDQC…RMETGTCMAL (72 aa)). 6 disulfide bridges follow: Cys-21–Cys-46, Cys-25–Cys-48, Cys-28–Cys-49, Cys-35–Cys-52, Cys-60–Cys-74, and Cys-66–Cys-87. The VWFC domain maps to 93-159 (NSCVFDGVVY…GECCEKWVCD (67 aa)). One can recognise a TSP type-1 domain in the interval 190–235 (ACIAQTTEWSACSKTCGMGVSSRVTNRNARCEMQKQIRLCMVRSCE). Intrachain disulfides connect Cys-249–Cys-286, Cys-266–Cys-300, Cys-277–Cys-316, Cys-280–Cys-318, and Cys-285–Cys-322. The region spanning 249 to 323 (CVRVRKTTKP…STCVCHYNCP (75 aa)) is the CTCK domain. Asn-265 carries N-linked (GlcNAc...) asparagine glycosylation.

This sequence belongs to the CCN family.

The protein localises to the secreted. It is found in the cytoplasm. The protein resides in the cell junction. Its subcellular location is the gap junction. Functionally, immediate-early protein playing a role in various cellular processes including proliferation, adhesion, migration, differentiation and survival. Acts by binding to integrins or membrane receptors such as NOTCH1. The polypeptide is CCN family member 3 (ccn3) (Xenopus laevis (African clawed frog)).